Consider the following 1267-residue polypeptide: MSSTILTQFGPFIESISGIIDQSNDIFEEAAKAFSAFTRSDVYKALDEIPFHDHATVHIPPTIYSKPSHDSYYYVDALNRVRRRTYQGDDDVYVPNCSIVELLEPHETLTSYGRLSSAIEARAKEGDPQARIATTYARISESQARQIKAPLEKFVLALLVAESGDALYDPILQKYDDVADLTHNCPLWCFREICRHVSGPLPDRAPYLYLSAGVFWLMSPRMTSAIPPLLSDLVNLAILQQTAGLDPSLVKMGVQVCLQAAASASYAWYVLKTKSVFPQNTLHSMYETLEGGFCPNLAWLEPRSDYKFMYMGATPLSGKYARTAPSNETRARQLGEKYGLSTIIGDLRQRTRQFTKHDFASVRYIRDAMACTSGIFLVRTPTETVLQEYTQSPEIKVPIPQKDWTGPIGEIRVLKDTTSSIARYLYRTWYLAAARMASQPRTWDPLFQAIMRSQYVTARGGSGAALRESLYAINVSLPDFKGLPVKAATKIFQAAQLANLPFSHTSVAILADTSMGLRNQVQRRPRSIMPLNVPQQQVSAPHTLTADYINYHMNLSTTSGSAVIEKVIPLGVYASSPPNQSINIDISACDASITWDFFLSVIMAAIHEGVASSSIGKPFMGVPASIVNDESVVGVRAARPISGMQNMVQHLSKLYKRGFSYRVNDSFSPGNDFTHMTTTFPSGSTATSTEHTANNSTMMETFLNVWGPEHTNDPDVLRLMRSLTIQRNYVCQGDDGLMIIDGTTAGKVSSETIQKMLELISAYGEEFGWKYDIAYDGTAEYLKLYFIFGCRIPNLSRHPIVGKERANSSAEEPWPAILDQVMGIFFNGVHDGLQWQRWIRYCSSLCCAFSRQRTMIGEEVRYLQYPMWSFVYWGLPPVKLFGSDPWIFSWYMPTGDLGMYSWISLIRPLMTRWMVANGYVSERCSSIFGNADYRRCFNDIRLYQGYYMARLPRNPKKSGRAAPRETREQFTQALSDYLMQNPELKSRVLRGRSEWEKYGAGIIHNPPSLFDVPHKWYQGAQEAATATREELSDMDDTLLRSRRHTYSSFSKLLEAYLRVRWRMCEAREPSVDLRLPLCAGIDPLNSDPFLKMVSVGPMLQSTRKYFAQTLFMAKTVSGLDVNAIDSALLRLRTLGADKKALTAQLLMVGLQESEADALAGKIMLQDVNTVQLARVVNLAVPDTWMSLDFDSMFKHHVNLLPKDGRHLNTDIPPRMGWLRAILRFLGAGVAMTATGVAVNVYLEDIDGGGRSLGQRFMTWMRQEGRSA.

The RdRp catalytic domain occupies 555-792 (LSTTSGSAVI…KLYFIFGCRI (238 aa)).

This sequence belongs to the reoviridae RNA-directed RNA polymerase family.

The protein resides in the virion. The catalysed reaction is RNA(n) + a ribonucleoside 5'-triphosphate = RNA(n+1) + diphosphate. In terms of biological role, RNA-directed RNA polymerase that is involved in transcription and genome replication. Following infection, it catalyzes the synthesis of fully conservative plus strands. After core assembly, which consists in recruitment of one capped plus-strand for each genomic segments and polymerase complexes, the polymerase switches mode and catalyzes the synthesis of complementary minus-strands. This chain is RNA-directed RNA polymerase lambda-3 (L1), found in Mammalia (T2J).